The chain runs to 209 residues: Large ribosomal subunit protein uL4 (209 aa).

The tract at residues 45–77 (RQGTHKAKERAEVTGSTRKIKKQKGTGTARAGS) is disordered.

It belongs to the universal ribosomal protein uL4 family. Part of the 50S ribosomal subunit.

In terms of biological role, one of the primary rRNA binding proteins, this protein initially binds near the 5'-end of the 23S rRNA. It is important during the early stages of 50S assembly. It makes multiple contacts with different domains of the 23S rRNA in the assembled 50S subunit and ribosome. Functionally, forms part of the polypeptide exit tunnel. This Flavobacterium johnsoniae (strain ATCC 17061 / DSM 2064 / JCM 8514 / BCRC 14874 / CCUG 350202 / NBRC 14942 / NCIMB 11054 / UW101) (Cytophaga johnsonae) protein is Large ribosomal subunit protein uL4.